We begin with the raw amino-acid sequence, 269 residues long: tRNA pseudouridine synthase A (269 aa).

Asp-55 (nucleophile) is an active-site residue. Position 111 (Tyr-111) interacts with substrate.

This sequence belongs to the tRNA pseudouridine synthase TruA family.

The enzyme catalyses uridine(38/39/40) in tRNA = pseudouridine(38/39/40) in tRNA. In terms of biological role, formation of pseudouridine at positions 38, 39 and 40 in the anticodon stem and loop of transfer RNAs. The chain is tRNA pseudouridine synthase A from Methanosarcina acetivorans (strain ATCC 35395 / DSM 2834 / JCM 12185 / C2A).